A 301-amino-acid polypeptide reads, in one-letter code: Chitin deacetylase 1 (301 aa).

Residues 1–24 form the signal peptide; that stretch reads MKIFNTIQSVLFAAFFLKQGNCLA. 3 N-linked (GlcNAc...) asparagine glycosylation sites follow: asparagine 26, asparagine 50, and asparagine 68. Cysteine 107 and cysteine 290 form a disulfide bridge. One can recognise a NodB homology domain in the interval 108–288; sequence FKLSQTFDDG…LIGSDQLTIA (181 aa). Aspartate 115 functions as the Proton acceptor in the catalytic mechanism. Aspartate 115 is a binding site for acetate. Co(2+)-binding residues include aspartate 116, histidine 162, and histidine 166. N-linked (GlcNAc...) asparagine glycosylation is present at asparagine 189. Position 203 (tyrosine 203) interacts with acetate. Histidine 263 acts as the Proton donor in catalysis.

It belongs to the polysaccharide deacetylase family. Requires Co(2+) as cofactor.

It localises to the prospore. The enzyme catalyses [(1-&gt;4)-N-acetyl-beta-D-glucosaminyl](n) + n H2O = chitosan + n acetate. Functionally, hydrolyzes the N-acetamido groups of N-acetyl-D-glucosamine residues in chitin to form chitosan and acetate. Chitosan is a component of the spore wall. This is Chitin deacetylase 1 from Saccharomyces cerevisiae (strain ATCC 204508 / S288c) (Baker's yeast).